A 293-amino-acid chain; its full sequence is Elongation factor Ts (293 aa).

The interval 79–82 (TDFV) is involved in Mg(2+) ion dislocation from EF-Tu.

Belongs to the EF-Ts family.

Its subcellular location is the cytoplasm. Its function is as follows. Associates with the EF-Tu.GDP complex and induces the exchange of GDP to GTP. It remains bound to the aminoacyl-tRNA.EF-Tu.GTP complex up to the GTP hydrolysis stage on the ribosome. This chain is Elongation factor Ts, found in Bacillus velezensis (strain DSM 23117 / BGSC 10A6 / LMG 26770 / FZB42) (Bacillus amyloliquefaciens subsp. plantarum).